The following is a 441-amino-acid chain: Chromosomal replication initiator protein DnaA (441 aa).

The domain I, interacts with DnaA modulators stretch occupies residues 1-71 (MDIRWEEILE…AVYQVVGDRF (71 aa)). The domain II stretch occupies residues 71–99 (FKVSILTESETSSHVLKEVIQSKFDDSDS). A domain III, AAA+ region region spans residues 100 to 318 (DLNPEYIFSN…GIVNDLVMYK (219 aa)). 4 residues coordinate ATP: G143, G145, K146, and T147. The segment at 319–441 (KAYEYFLLTE…HTIKHKISFQ (123 aa)) is domain IV, binds dsDNA.

Belongs to the DnaA family. As to quaternary structure, oligomerizes as a right-handed, spiral filament on DNA at oriC.

It is found in the cytoplasm. Functionally, plays an essential role in the initiation and regulation of chromosomal replication. ATP-DnaA binds to the origin of replication (oriC) to initiate formation of the DNA replication initiation complex once per cell cycle. Binds the DnaA box (a 9 base pair repeat at the origin) and separates the double-stranded (ds)DNA. Forms a right-handed helical filament on oriC DNA; dsDNA binds to the exterior of the filament while single-stranded (ss)DNA is stabiized in the filament's interior. The ATP-DnaA-oriC complex binds and stabilizes one strand of the AT-rich DNA unwinding element (DUE), permitting loading of DNA polymerase. After initiation quickly degrades to an ADP-DnaA complex that is not apt for DNA replication. Binds acidic phospholipids. In Leptospira biflexa serovar Patoc (strain Patoc 1 / Ames), this protein is Chromosomal replication initiator protein DnaA.